Consider the following 378-residue polypeptide: IDS-type sesquiterpene synthase (378 aa).

Mg(2+)-binding residues include Asp120 and Asp124. Positions 120–124 (DDYVD) match the DDXXD motif motif.

The protein belongs to the terpene synthase family. Mg(2+) serves as cofactor. As to expression, highly expressed in male epidermal tissue associated with the cuticle of ventral sternites.

The enzyme catalyses (2Z,6E)-farnesyl diphosphate = (Z)-alpha-bisabolene + diphosphate. It participates in pheromone biosynthesis. Its function is as follows. Sesquiterpene alcohol synthase that catalyzes the formation of the pheromone precursor (Z)-alpha-bisabolene from (2Z,6E)-farnesyl diphosphate. The chain is IDS-type sesquiterpene synthase from Nezara viridula (Southern green stink bug).